The sequence spans 339 residues: Deubiquitinase and deneddylase Dub2 (339 aa).

Residues 36 to 56 (IIIALFLIVISCGLILCAYTF) traverse the membrane as a helical segment. Catalysis depends on residues H203, D220, and C282.

Belongs to the peptidase C48 family.

The protein resides in the secreted. It is found in the host cell. The protein localises to the membrane. Its function is as follows. Effector proteins function to alter host cell physiology and promote bacterial survival in host tissues. This protease possesses deubiquitinating and deneddylating activities. The sequence is that of Deubiquitinase and deneddylase Dub2 (cdu2) from Chlamydia trachomatis serovar L2 (strain ATCC VR-902B / DSM 19102 / 434/Bu).